A 255-amino-acid chain; its full sequence is Protein DOG1-like 2 (255 aa).

A DOG1 domain is found at 10-246 (EKLQKRCYHE…HDRGRVRADV (237 aa)).

The sequence is that of Protein DOG1-like 2 from Arabidopsis thaliana (Mouse-ear cress).